Consider the following 392-residue polypeptide: RNA-binding protein 42 (392 aa).

Positions 293–371 (FRIFCGDLGN…RPIKLRKSQW (79 aa)) constitute an RRM domain. The disordered stretch occupies residues 372-392 (KDRNMDVVRKKQREKKKLGLR). The segment covering 381-392 (KKQREKKKLGLR) has biased composition (basic residues).

It belongs to the RRM RBM42 family.

It localises to the nucleus. The protein localises to the cytoplasm. Its function is as follows. May bind RNA. This Xenopus tropicalis (Western clawed frog) protein is RNA-binding protein 42 (rbm42).